A 169-amino-acid chain; its full sequence is Inorganic pyrophosphatase (169 aa).

Substrate-binding residues include Lys20, Arg34, and Tyr46. Asp56, Asp61, and Asp93 together coordinate Mg(2+). A substrate-binding site is contributed by Tyr130.

Belongs to the PPase family. As to quaternary structure, homohexamer. It depends on Mg(2+) as a cofactor.

It localises to the cytoplasm. It carries out the reaction diphosphate + H2O = 2 phosphate + H(+). Functionally, catalyzes the hydrolysis of inorganic pyrophosphate (PPi) forming two phosphate ions. The protein is Inorganic pyrophosphatase of Methanosarcina mazei (strain ATCC BAA-159 / DSM 3647 / Goe1 / Go1 / JCM 11833 / OCM 88) (Methanosarcina frisia).